Consider the following 574-residue polypeptide: Actin-binding protein wsp1 (574 aa).

Residues 19–130 enclose the WH1 domain; sequence IPKSTNKIIA…KKVLDKGCHP (112 aa). Disordered regions lie at residues 144–186, 221–494, and 517–574; these read KGSS…ELLN, AGTP…IAEL, and KSRK…DEWD. The segment covering 149-158 has biased composition (polar residues); it reads HAPNNSNIQP. Composition is skewed to pro residues over residues 230–240 and 251–260; these read PPIPPSIPSSR and PAPPPIPPPS. Composition is skewed to low complexity over residues 297 to 306 and 324 to 335; these read SRVSAAALAA and KPPIGNGSSNSS. Pro residues predominate over residues 352–368; that stretch reads PLPPQGRSAPPPPPPRS. Residue Ser-386 is modified to Phosphoserine. Pro residues predominate over residues 415-485; sequence PPVPTPPSLP…PPPAPAPAPA (71 aa). The 20-residue stretch at 499–518 folds into the WH2 domain; the sequence is GRANLMASIRASGGMDLLKS. Residues 521 to 545 are compositionally biased toward polar residues; that stretch reads VSASPSVASTKTSNPPVEAPPSNNL. A compositionally biased stretch (acidic residues) spans 563 to 574; it reads SDEEDEDDDEWD.

In terms of assembly, interacts with vrp1.

The protein resides in the cytoplasm. The protein localises to the cytoskeleton. Has a role in regulating actin assembly, so regulating polarized growth. This chain is Actin-binding protein wsp1 (wsp1), found in Schizosaccharomyces pombe (strain 972 / ATCC 24843) (Fission yeast).